The sequence spans 207 residues: Large ribosomal subunit protein bL25 (207 aa).

The tract at residues 1–20 (MANHQIKAQRRKDEGKGASR) is disordered.

Belongs to the bacterial ribosomal protein bL25 family. CTC subfamily. Part of the 50S ribosomal subunit; part of the 5S rRNA/L5/L18/L25 subcomplex. Contacts the 5S rRNA. Binds to the 5S rRNA independently of L5 and L18.

Its function is as follows. This is one of the proteins that binds to the 5S RNA in the ribosome where it forms part of the central protuberance. The sequence is that of Large ribosomal subunit protein bL25 from Xylella fastidiosa (strain M23).